A 248-amino-acid chain; its full sequence is Probable transcriptional regulatory protein PLES_43501 (248 aa).

This sequence belongs to the TACO1 family.

The protein localises to the cytoplasm. This chain is Probable transcriptional regulatory protein PLES_43501, found in Pseudomonas aeruginosa (strain LESB58).